Here is a 338-residue protein sequence, read N- to C-terminus: tRNA N6-adenosine threonylcarbamoyltransferase (338 aa).

Residues histidine 111 and histidine 115 each coordinate Fe cation. Residues 134-138 (LLSGG), aspartate 167, glycine 180, and asparagine 275 contribute to the substrate site. Aspartate 304 serves as a coordination point for Fe cation.

Belongs to the KAE1 / TsaD family. The cofactor is Fe(2+).

It localises to the cytoplasm. The enzyme catalyses L-threonylcarbamoyladenylate + adenosine(37) in tRNA = N(6)-L-threonylcarbamoyladenosine(37) in tRNA + AMP + H(+). Its function is as follows. Required for the formation of a threonylcarbamoyl group on adenosine at position 37 (t(6)A37) in tRNAs that read codons beginning with adenine. Is involved in the transfer of the threonylcarbamoyl moiety of threonylcarbamoyl-AMP (TC-AMP) to the N6 group of A37, together with TsaE and TsaB. TsaD likely plays a direct catalytic role in this reaction. This is tRNA N6-adenosine threonylcarbamoyltransferase from Leptospira borgpetersenii serovar Hardjo-bovis (strain JB197).